The following is an 811-amino-acid chain: Protein kinase C-binding protein NELL2a (811 aa).

The signal sequence occupies residues 1–18 (MAFLQLFVGLLCGAAVSA). A Laminin G-like domain is found at 54-225 (AFMFQGSSRS…TQCPDLNRTC (172 aa)). 3 N-linked (GlcNAc...) asparagine glycosylation sites follow: asparagine 222, asparagine 290, and asparagine 295. The region spanning 269–328 (RTCRVKDQIYREEQSWTDGCKNCTCSNGTVRCEKILCPPLDCPDGTTPAYVTGTCCKECQ) is the VWFC 1 domain. An EGF-like 1 domain is found at 395–437 (GHDFCAEENICSENSDCVNLDAGASCGCKNGFRPLRLDSAYCE). Cystine bridges form between cysteine 399–cysteine 411, cysteine 405–cysteine 420, and cysteine 422–cysteine 436. Residues aspartate 438, isoleucine 439, and glutamate 441 each contribute to the Ca(2+) site. In terms of domain architecture, EGF-like 2; calcium-binding spans 438 to 479 (DIDECAEGRHYCRENTECVNTAGSFMCVCHTGFIRIDDYSCT). 9 cysteine pairs are disulfide-bonded: cysteine 442–cysteine 455, cysteine 449–cysteine 464, cysteine 466–cysteine 478, cysteine 484–cysteine 497, cysteine 491–cysteine 506, cysteine 508–cysteine 519, cysteine 523–cysteine 533, cysteine 527–cysteine 539, and cysteine 541–cysteine 550. Ca(2+) is bound by residues asparagine 457, threonine 458, and serine 461. Residues 480 to 520 (EHDECASGQHDCDENALCFNTVGGHSCSCKPGYSGNGTVCR) form the EGF-like 3; calcium-binding domain. N-linked (GlcNAc...) asparagine glycosylation occurs at asparagine 515. In terms of domain architecture, EGF-like 4 spans 521 to 551 (ALCDGRCLNGGSCASPNVCVCVQGFSGQNCE). The Ca(2+) site is built by aspartate 553, isoleucine 554, and glutamate 556. The region spanning 553–592 (DIDECSEGLVQCAAHATCVNLPGWYHCECRDGYHDNEVFS) is the EGF-like 5; calcium-binding domain. Intrachain disulfides connect cysteine 557-cysteine 570, cysteine 564-cysteine 579, and cysteine 581-cysteine 598. Ca(2+) contacts are provided by asparagine 572, leucine 573, and tryptophan 576. Aspartate 600, isoleucine 601, and glutamate 603 together coordinate Ca(2+). Residues 600-635 (DIDECRTGRSTCANDTVCFNLDGGFDCRCPHGHNCS) form the EGF-like 6; calcium-binding domain. 3 cysteine pairs are disulfide-bonded: cysteine 604–cysteine 617, cysteine 611–cysteine 626, and cysteine 628–cysteine 634. The N-linked (GlcNAc...) asparagine glycan is linked to asparagine 613. Ca(2+)-binding residues include asparagine 619, leucine 620, and glycine 623. The N-linked (GlcNAc...) asparagine glycan is linked to asparagine 633. 2 consecutive VWFC domains span residues 636–691 (GDCI…PECD) and 696–754 (SQCL…PRCV).

In terms of assembly, homotrimer.

Its subcellular location is the secreted. May regulate neuronal differentiation, polarization and axon guidance. This is Protein kinase C-binding protein NELL2a (nell2a) from Danio rerio (Zebrafish).